We begin with the raw amino-acid sequence, 292 residues long: Insulin-like growth factor-binding protein 3 (292 aa).

Positions 1 to 27 (MHPARPALWAAALTALTLLRGPPVARA) are cleaved as a signal peptide. The 84-residue stretch at 36–119 (PVVRCEPCDA…LNGRGFCANA (84 aa)) folds into the IGFBP N-terminal domain. Intrachain disulfides connect Cys40-Cys69, Cys43-Cys71, Cys51-Cys72, Cys60-Cys75, Cys83-Cys96, and Cys90-Cys116. Asn118, Asn124, and Asn137 each carry an N-linked (GlcNAc...) asparagine glycan. 2 disordered regions span residues 127–161 (AYLP…THRV) and 191–211 (YESQ…ETEY). The span at 129–139 (LPSQPSPGNTT) shows a compositional bias: polar residues. The residue at position 149 (Ser149) is a Phosphoserine. Polar residues predominate over residues 192-203 (ESQSTDTQNFSS). Asn200 carries N-linked (GlcNAc...) asparagine glycosylation. A Phosphoserine modification is found at Ser202. One can recognise a Thyroglobulin type-1 domain in the interval 211 to 286 (YGPCRREMED…DTKGKDDVHC (76 aa)). Intrachain disulfides connect Cys214-Cys241, Cys252-Cys263, and Cys265-Cys286.

In terms of assembly, interacts with XLKD1. Binds IGF2 more than IGF1. Forms a ternary complex of about 140 to 150 kDa with IGF1 or IGF2 and a 85 kDa glycoprotein (ALS). Interacts with humanin; humanin competes with importin KPNB1 for binding to IGFBP3, blocking IGFBP3 nuclear import and IGFBP3-mediated apoptosis. Interacts with TMEM219. Interacts with RXRA; this interaction modulates the transcriptional activity of RXRA. Interacts with LRP1; this interaction mediates cell growth inhibition independent of IGF1. In terms of processing, phosphorylated by FAM20C in the extracellular medium. Phosphorylated by CK2; resulting in decreased nuclear localization.

The protein resides in the secreted. Its subcellular location is the nucleus. Multifunctional protein that plays a critical role in regulating the availability of IGFs such as IGF1 and IGF2 to their receptors and thereby regulates IGF-mediated cellular processes including proliferation, differentiation, and apoptosis in a cell-type specific manner. Also exhibits IGF-independent antiproliferative and apoptotic effects mediated by its receptor TMEM219/IGFBP-3R. Inhibits the positive effect of humanin on insulin sensitivity. Promotes testicular germ cell apoptosis. Acts via LRP-1/alpha2M receptor, also known as TGF-beta type V receptor, to mediate cell growth inhibition independent of IGF1. Mechanistically, induces serine-specific dephosphorylation of IRS1 or IRS2 upon ligation to its receptor, leading to the inhibitory cascade. In the nucleus, interacts with transcription factors such as retinoid X receptor-alpha/RXRA to regulate transcriptional signaling and apoptosis. The polypeptide is Insulin-like growth factor-binding protein 3 (Igfbp3) (Rattus norvegicus (Rat)).